The sequence spans 566 residues: Transcriptional regulatory protein XylR (566 aa).

Residues 235-464 (GIGHSPAYKR…LENALERGVI (230 aa)) enclose the Sigma-54 factor interaction domain. ATP is bound by residues 263–270 (GETGVGKE) and 326–335 (ANGGTIFLDE). The H-T-H motif DNA-binding region spans 534–553 (ISQAARLLGLTRPAMAYRLK).

Its function is as follows. Regulatory protein of the TOL plasmid xyl operons. In the presence of m-xylene or m-methylbenzyl alcohol XylR activates both the xylCMABN operon and the regulatory gene xylS; xylS itself activates the xylXYZLTEGFJQKIH operon. XylR interacts with sigma-54. In Pseudomonas putida (Arthrobacter siderocapsulatus), this protein is Transcriptional regulatory protein XylR (xylR).